Consider the following 614-residue polypeptide: Autophagy-related protein 22-1 (614 aa).

The interval 1-29 (MQNCTNSPEDQAASVCPPPPQFPGDDTRP) is disordered. A glycan (N-linked (GlcNAc...) asparagine) is linked at asparagine 3. Transmembrane regions (helical) follow at residues 41–61 (YGWAAEVFTVCAMGSFLPITL), 126–146 (TASFAMYTFSLSVFIQAILII), 160–180 (MLLVIFALIGSVSTMLFLAVV), and 185–205 (LLGGLFAIISNTCFGASFVLL). The segment at 229-254 (PTGTSHDSTSTADGPGQTDGTETTSL) is disordered. A compositionally biased stretch (polar residues) spans 230 to 254 (TGTSHDSTSTADGPGQTDGTETTSL). The next 8 helical transmembrane spans lie at 291–311 (GIGIGYIGAVILQAICILVVV), 322–342 (LVLFLIGLWWFTFTIPAAMWL), 383–403 (ILLFLAAWFLLSDGIATVSGT), 417–437 (AALGLINVIAMIAGVFGAFSW), 452–472 (IVACIILFELVPLYGLLGFIP), 486–506 (WEMYPLGVIYGLVMGGLSSYC), 523–545 (YALYAITDKGSSVFGPAIVGIIT), and 554–574 (AFVFLAVLILLPLPLMLLVDV).

Belongs to the ATG22 family.

It localises to the vacuole membrane. Vacuolar effluxer which mediate the efflux of amino acids resulting from autophagic degradation. The release of autophagic amino acids allows the maintenance of protein synthesis and viability during nitrogen starvation. The chain is Autophagy-related protein 22-1 (atg22-1) from Aspergillus niger (strain ATCC MYA-4892 / CBS 513.88 / FGSC A1513).